The following is a 138-amino-acid chain: Diuretic hormone 1 (138 aa).

An N-terminal signal peptide occupies residues 1–19 (MMWWAIWCVMVVVSSAASA). Positions 20-78 (APAPDSAPMDLVQIDSAGPDDESLGYAVSSLEGRYGAEAPWLYLLAEMPRDSQIGRAAV) are excised as a propeptide. An Isoleucine amide modification is found at Ile121. Residues 125–138 (GLQWSRSEQPSAYY) constitute a propeptide that is removed on maturation.

This sequence belongs to the sauvagine/corticotropin-releasing factor/urotensin I family.

The protein resides in the secreted. Regulation of fluid secretion. The sequence is that of Diuretic hormone 1 from Manduca sexta (Tobacco hawkmoth).